The chain runs to 301 residues: GTPase Era (301 aa).

In terms of domain architecture, Era-type G spans 7 to 175 (YCGFIAIVGR…AGIVRKHLPE (169 aa)). The segment at 15-22 (GRPNVGKS) is G1. 15-22 (GRPNVGKS) contributes to the GTP binding site. Positions 41–45 (QTTRH) are G2. The segment at 62–65 (DTPG) is G3. GTP contacts are provided by residues 62 to 66 (DTPGL) and 124 to 127 (NKVD). Positions 124 to 127 (NKVD) are G4. Residues 154 to 156 (ISA) form a G5 region. One can recognise a KH type-2 domain in the interval 206–283 (LGAELPYSVT…HLELWVKVKS (78 aa)).

This sequence belongs to the TRAFAC class TrmE-Era-EngA-EngB-Septin-like GTPase superfamily. Era GTPase family. Monomer.

The protein localises to the cytoplasm. Its subcellular location is the cell inner membrane. In terms of biological role, an essential GTPase that binds both GDP and GTP, with rapid nucleotide exchange. Plays a role in 16S rRNA processing and 30S ribosomal subunit biogenesis and possibly also in cell cycle regulation and energy metabolism. In Salmonella paratyphi B (strain ATCC BAA-1250 / SPB7), this protein is GTPase Era.